A 57-amino-acid polypeptide reads, in one-letter code: Weak toxin CM-1b (57 aa).

4 disulfides stabilise this stretch: cysteine 3-cysteine 19, cysteine 12-cysteine 37, cysteine 40-cysteine 49, and cysteine 50-cysteine 55.

The protein belongs to the three-finger toxin family. Short-chain subfamily. Orphan group XX sub-subfamily. In terms of tissue distribution, expressed by the venom gland.

Its subcellular location is the secreted. The chain is Weak toxin CM-1b from Hemachatus haemachatus (Rinkhals).